The following is a 637-amino-acid chain: Chaperone protein HtpG (637 aa).

Residues 1 to 330 are a; substrate-binding; sequence MATAPASHAF…TEDLPLNISR (330 aa). The interval 331-551 is b; that stretch reads ETLQENVVVR…GGASTSSMDR (221 aa). The tract at residues 552 to 637 is c; sequence LLRVLHKDES…GDWYKAVRGL (86 aa).

It belongs to the heat shock protein 90 family. Homodimer.

Its subcellular location is the cytoplasm. In terms of biological role, molecular chaperone. Has ATPase activity. The chain is Chaperone protein HtpG from Nitratidesulfovibrio vulgaris (strain ATCC 29579 / DSM 644 / CCUG 34227 / NCIMB 8303 / VKM B-1760 / Hildenborough) (Desulfovibrio vulgaris).